A 413-amino-acid polypeptide reads, in one-letter code: Arginine biosynthesis bifunctional protein ArgJ (413 aa).

6 residues coordinate substrate: Thr158, Lys184, Thr195, Glu285, Asn408, and Ser413. Thr195 acts as the Nucleophile in catalysis.

It belongs to the ArgJ family. In terms of assembly, heterotetramer of two alpha and two beta chains.

Its subcellular location is the cytoplasm. The enzyme catalyses N(2)-acetyl-L-ornithine + L-glutamate = N-acetyl-L-glutamate + L-ornithine. The catalysed reaction is L-glutamate + acetyl-CoA = N-acetyl-L-glutamate + CoA + H(+). It participates in amino-acid biosynthesis; L-arginine biosynthesis; L-ornithine and N-acetyl-L-glutamate from L-glutamate and N(2)-acetyl-L-ornithine (cyclic): step 1/1. Its pathway is amino-acid biosynthesis; L-arginine biosynthesis; N(2)-acetyl-L-ornithine from L-glutamate: step 1/4. In terms of biological role, catalyzes two activities which are involved in the cyclic version of arginine biosynthesis: the synthesis of N-acetylglutamate from glutamate and acetyl-CoA as the acetyl donor, and of ornithine by transacetylation between N(2)-acetylornithine and glutamate. The polypeptide is Arginine biosynthesis bifunctional protein ArgJ (Brucella suis biovar 1 (strain 1330)).